We begin with the raw amino-acid sequence, 92 residues long: Small ribosomal subunit protein uS19 (92 aa).

The protein belongs to the universal ribosomal protein uS19 family.

Its function is as follows. Protein S19 forms a complex with S13 that binds strongly to the 16S ribosomal RNA. The sequence is that of Small ribosomal subunit protein uS19 from Mycoplasmopsis agalactiae (strain NCTC 10123 / CIP 59.7 / PG2) (Mycoplasma agalactiae).